Reading from the N-terminus, the 293-residue chain is Acetyl-coenzyme A carboxylase carboxyl transferase subunit beta (293 aa).

Residues Leu-29–Lys-293 enclose the CoA carboxyltransferase N-terminal domain. 4 residues coordinate Zn(2+): Cys-33, Cys-36, Cys-52, and Cys-55. A C4-type zinc finger spans residues Cys-33–Cys-55.

Belongs to the AccD/PCCB family. As to quaternary structure, acetyl-CoA carboxylase is a heterohexamer composed of biotin carboxyl carrier protein (AccB), biotin carboxylase (AccC) and two subunits each of ACCase subunit alpha (AccA) and ACCase subunit beta (AccD). The cofactor is Zn(2+).

The protein resides in the cytoplasm. It catalyses the reaction N(6)-carboxybiotinyl-L-lysyl-[protein] + acetyl-CoA = N(6)-biotinyl-L-lysyl-[protein] + malonyl-CoA. It participates in lipid metabolism; malonyl-CoA biosynthesis; malonyl-CoA from acetyl-CoA: step 1/1. In terms of biological role, component of the acetyl coenzyme A carboxylase (ACC) complex. Biotin carboxylase (BC) catalyzes the carboxylation of biotin on its carrier protein (BCCP) and then the CO(2) group is transferred by the transcarboxylase to acetyl-CoA to form malonyl-CoA. This chain is Acetyl-coenzyme A carboxylase carboxyl transferase subunit beta, found in Prochlorococcus marinus (strain MIT 9303).